Reading from the N-terminus, the 1145-residue chain is Trafficking protein particle complex subunit 10 (1145 aa).

The protein belongs to the TMEM1 family. In terms of assembly, part of the multisubunit TRAPP (transport protein particle) complex. Interacts with Shal (via C-terminal dendritic targeting motif). In terms of tissue distribution, co-expressed with Shal in the nervous system.

It localises to the golgi apparatus. It is found in the cis-Golgi network. The protein localises to the cell projection. The protein resides in the dendrite. Its subcellular location is the perikaryon. Functionally, may play a role in vesicular transport from endoplasmic reticulum to Golgi. Has a role in one of the several mechanisms underlying dendritic localization of Shal channels. In Drosophila melanogaster (Fruit fly), this protein is Trafficking protein particle complex subunit 10 (SIDL).